A 519-amino-acid chain; its full sequence is Bifunctional purine biosynthesis protein PurH (519 aa).

The 147-residue stretch at 1 to 147 (MAKITRALIS…KNNHDVTVLV (147 aa)) folds into the MGS-like domain.

The protein belongs to the PurH family.

The enzyme catalyses (6R)-10-formyltetrahydrofolate + 5-amino-1-(5-phospho-beta-D-ribosyl)imidazole-4-carboxamide = 5-formamido-1-(5-phospho-D-ribosyl)imidazole-4-carboxamide + (6S)-5,6,7,8-tetrahydrofolate. It carries out the reaction IMP + H2O = 5-formamido-1-(5-phospho-D-ribosyl)imidazole-4-carboxamide. It participates in purine metabolism; IMP biosynthesis via de novo pathway; 5-formamido-1-(5-phospho-D-ribosyl)imidazole-4-carboxamide from 5-amino-1-(5-phospho-D-ribosyl)imidazole-4-carboxamide (10-formyl THF route): step 1/1. It functions in the pathway purine metabolism; IMP biosynthesis via de novo pathway; IMP from 5-formamido-1-(5-phospho-D-ribosyl)imidazole-4-carboxamide: step 1/1. In Trichlorobacter lovleyi (strain ATCC BAA-1151 / DSM 17278 / SZ) (Geobacter lovleyi), this protein is Bifunctional purine biosynthesis protein PurH.